The sequence spans 475 residues: Ankyrin repeat, SAM and basic leucine zipper domain-containing protein 1 (475 aa).

The segment at 1–24 is disordered; that stretch reads MAAGPLRGLAVAGGGESSESEDDG. A phosphoserine mark is found at Ser-17, Ser-18, and Ser-20. ANK repeat units lie at residues 45–74, 78–107, 110–144, 148–177, 181–210, and 214–243; these read ERQE…SVDT, YGWT…NASF, DKQT…DPNV, RLMT…EVNT, NGYT…NKMI, and DGKT…PLEG. Residues 272 to 334 form the SAM domain; it reads SYTAFGDLEI…KIMAALKELE (63 aa).

Interacts with DDX4, PIWIL1, RANBP9 and TDRD1.

It is found in the cytoplasm. Plays a central role during spermatogenesis by repressing transposable elements and preventing their mobilization, which is essential for the germline integrity. Acts via the piRNA metabolic process, which mediates the repression of transposable elements during meiosis by forming complexes composed of piRNAs and Piwi proteins and governs the methylation and subsequent repression of transposons. Its association with pi-bodies suggests a participation in the primary piRNAs metabolic process. Required prior to the pachytene stage to facilitate the production of multiple types of piRNAs, including those associated with repeats involved in the regulation of retrotransposons. May act by mediating protein-protein interactions during germ cell maturation. The chain is Ankyrin repeat, SAM and basic leucine zipper domain-containing protein 1 (ASZ1) from Ovis aries (Sheep).